The primary structure comprises 390 residues: Pre-mycofactocin synthase (390 aa).

The FMN hydroxy acid dehydrogenase domain maps to 1 to 383; that stretch reads MADEWFETVA…RSDDILIPAD (383 aa). Residues S108, Q128, T156, and K254 each contribute to the FMN site. H278 (proton acceptor) is an active-site residue. FMN is bound by residues 309–313 and 332–333; these read DGGIR and GR.

The protein belongs to the FMN-dependent alpha-hydroxy acid dehydrogenase family. Requires FMN as cofactor.

It catalyses the reaction 3-amino-5-[(4-hydroxyphenyl)methyl]-4,4-dimethyl-2-pyrrolidin-2-one + O2 + H2O = pre-mycofactocin + H2O2 + NH4(+). Its function is as follows. Involved in the biosynthesis of the enzyme cofactor mycofactocin (MFT). Catalyzes the oxidative deamination of AHDP (3-amino-5-[(4-hydroxyphenyl)methyl]-4,4-dimethyl-2-pyrrolidin-2-one), forming an alpha-keto amide moiety on the resulting molecule, which is called pre-mycofactocin (PMFT). This reaction occurs via a 5-[(4-hydroxyphenyl)methyl]-3-imino-4,4-dimethylpyrrolidin-2-one intermediate, which converts to PMFT. The alpha-keto amide moiety is the redox-active center for the redox activity of mycofactocin. This is Pre-mycofactocin synthase from Mycobacterium ulcerans (strain Agy99).